The following is a 2412-amino-acid chain: Centrosomal protein of 295 kDa (2412 aa).

The necessary for centriole targeting and microtubule association stretch occupies residues 1-540; that stretch reads MKRKGMNTKL…KQADQPEVCC (540 aa). Serine 13 is subject to Phosphoserine. 5 coiled-coil regions span residues 63–84, 114–134, 209–273, 489–535, and 563–592; these read AEELRAKWEEAQSQKIQNLEKL, AERKRKAEVRHKEALKVQKNQ, DAHL…DLAR, RRKQ…QADQ, and HQLLQQNRLHKETVETARKRLLEYQTVLKE. Disordered regions lie at residues 600–641 and 739–762; these read SALV…YQPV and LDSQQISSEDSENISSKPSEPSPF. Serine 634 is subject to Phosphoserine. Residues 739–757 are compositionally biased toward polar residues; it reads LDSQQISSEDSENISSKPS. A coiled-coil region spans residues 811–841; it reads AQQGDLRFLQEQLELQKKVLQARQEAREKLL. Disordered stretches follow at residues 871 to 891, 973 to 1005, 1158 to 1178, and 1216 to 1240; these read SASAESGNFQTSSTKSDATVS, DTQSKKIQKQPLPANKKGLLPSQSEVSKAQDGS, LSSPSQVTDWGTSRGSVSVRS, and WVDTEKESFQSSPLTPENPSSQQTG. 3 stretches are compositionally biased toward polar residues: residues 993 to 1005, 1158 to 1176, and 1224 to 1240; these read PSQSEVSKAQDGS, LSSPSQVTDWGTSRGSVSV, and FQSSPLTPENPSSQQTG. Coiled-coil stretches lie at residues 1300-1327 and 1448-1493; these read QQDSLKALQEQLATQREAIIHSRQEAHE and QHDD…SKQI. Residue serine 1573 is modified to Phosphoserine. 4 disordered regions span residues 1820–1895, 1916–1937, 2028–2048, and 2089–2111; these read LAHD…LSSV, ESFSEQTEHLEQESTNKQEETD, DLSSPGTSQEDSDFYQSSESS, and TEGSEQSFQQLRPEFSSQESQHA. Positions 1836 to 1868 are enriched in basic and acidic residues; it reads SKSHDDNAEAVKVKKSDVEDHAVLSHAVSKEEA. Polar residues predominate over residues 1885–1895; sequence QEISQEPLSSV. A compositionally biased stretch (basic and acidic residues) spans 1921–1935; sequence QTEHLEQESTNKQEE. The segment covering 2089–2108 has biased composition (polar residues); sequence TEGSEQSFQQLRPEFSSQES. Residues 2367-2412 are ALMS motif; that stretch reads SLQEAFMTRQTLTERSYQRQREIWNKTRLPQTKVSKEKLPTGCTGS.

In terms of assembly, interacts (via ALMS motif) with microtubules; this interaction is direct.

The protein localises to the cytoplasm. It is found in the cytoskeleton. The protein resides in the microtubule organizing center. Its subcellular location is the centrosome. It localises to the centriole. The protein localises to the spindle. Functionally, centriole-enriched microtubule-binding protein involved in centriole biogenesis. Essential for the generation of the distal portion of new-born centrioles in a CPAP- and CEP120-mediated elongation dependent manner during the cell cycle S/G2 phase after formation of the initiating cartwheel structure. Required for the recruitment of centriolar proteins, such as POC1B, POC5 and CEP135, into the distal portion of centrioles. Also required for centriole-to-centrosome conversion during mitotic progression, but is dispensable for cartwheel removal or centriole disengagement. Binds to and stabilizes centriolar microtubule. May be involved in ciliogenesis. The polypeptide is Centrosomal protein of 295 kDa (Mus musculus (Mouse)).